The chain runs to 338 residues: tRNA (cytidine(56)-2'-O)-methyltransferase (338 aa).

S-adenosyl-L-methionine contacts are provided by residues L79 and 105-109 (GSEKV). Residues 188–295 (LINHVKSVKE…VAHADNLFAG (108 aa)) enclose the HD domain.

It belongs to the aTrm56 family. As to quaternary structure, homodimer.

It localises to the cytoplasm. The enzyme catalyses cytidine(56) in tRNA + S-adenosyl-L-methionine = 2'-O-methylcytidine(56) in tRNA + S-adenosyl-L-homocysteine + H(+). Specifically catalyzes the AdoMet-dependent 2'-O-ribose methylation of cytidine at position 56 in tRNAs. This is tRNA (cytidine(56)-2'-O)-methyltransferase from Thermoplasma volcanium (strain ATCC 51530 / DSM 4299 / JCM 9571 / NBRC 15438 / GSS1).